A 248-amino-acid polypeptide reads, in one-letter code: PF03932 family protein CutC (248 aa).

This sequence belongs to the CutC family. As to quaternary structure, homodimer.

The protein localises to the cytoplasm. This chain is PF03932 family protein CutC, found in Salmonella heidelberg (strain SL476).